Consider the following 899-residue polypeptide: Nuclear factor NF-kappa-B p100 subunit (899 aa).

Residues Ser23 and Ser161 each carry the phosphoserine modification. Residues 35–224 enclose the RHD domain; the sequence is ADGPYLVIVE…QPIHDSKSPG (190 aa). Positions 337–341 match the Nuclear localization signal motif; it reads RKRRK. A GRR region spans residues 346-377; that stretch reads FSQPFGGGSHMGGGSGGSAGGYGGAGGGGSLG. The segment at 403–434 is disordered; that stretch reads GGAQMAGSRRDTDAGEGAEEPRTPPEAPQGEP. Residues 410-425 are compositionally biased toward basic and acidic residues; sequence SRRDTDAGEGAEEPRT. Position 425 is a phosphothreonine (Thr425). 6 ANK repeats span residues 487 to 516, 526 to 555, 559 to 590, 599 to 628, 633 to 663, and 667 to 696; these read NGDT…HAQY, LHQT…DPTL, HGDS…HAVP, EGLY…EVEA, GGRT…NVNA, and AGNT…DIHA. Residues 698–734 are disordered; it reads NEEPLCPLPSPSTSGSDSDSEGPERDTQRNFRGHTPL. A phosphoserine mark is found at Ser713, Ser715, and Ser717. One copy of the ANK 7 repeat lies at 729-755; it reads RGHTPLDLTCSTKVKTLLLNAAQNTTE. The region spanning 764–851 is the Death domain; sequence AGPGLSLGDA…EGVRLLKGPE (88 aa). A Phosphoserine modification is found at Ser812. Basic and acidic residues predominate over residues 851-865; it reads ETRDKLPSTEVKEDS. A disordered region spans residues 851–899; sequence ETRDKLPSTEVKEDSAYGSQSVEQEAEKLCPPPEPPGGLCHGHPQPQVH. Lys855 participates in a covalent cross-link: Glycyl lysine isopeptide (Lys-Gly) (interchain with G-Cter in ubiquitin). Phosphoserine; by MAP3K14 is present on residues Ser865 and Ser869. The segment covering 887 to 899 has biased composition (low complexity); sequence GGLCHGHPQPQVH.

In terms of assembly, component of the NF-kappa-B RelB-p52 complex. Homodimer; component of the NF-kappa-B p52-p52 complex. Component of the NF-kappa-B p65-p52 complex. Component of the NF-kappa-B p52-c-Rel complex. NFKB2/p52 interacts with NFKBIE. Component of a complex consisting of the NF-kappa-B p50-p50 homodimer and BCL3. Directly interacts with MEN1. While translation occurs, the particular unfolded structure after the GRR repeat promotes the generation of p52 making it an acceptable substrate for the proteasome. This process is known as cotranslational processing. The processed form is active and the unprocessed form acts as an inhibitor (I kappa B-like), being able to form cytosolic complexes with NF-kappa B, trapping it in the cytoplasm. Complete folding of the region downstream of the GRR repeat precludes processing. In terms of processing, subsequent to MAP3K14-dependent serine phosphorylation, p100 polyubiquitination occurs then triggering its proteasome-dependent processing. Post-translationally, constitutive processing is tightly suppressed by its C-terminal processing inhibitory domain, named PID, which contains the death domain. Ubiquitinated by TRIM55; leading to processing by VCP and subsequent ubiquitin-dependent protein degradation by the proteasome. As to expression, highly expressed in lymph nodes and thymus.

It is found in the nucleus. Its subcellular location is the cytoplasm. Functionally, NF-kappa-B is a pleiotropic transcription factor present in almost all cell types and is the endpoint of a series of signal transduction events that are initiated by a vast array of stimuli related to many biological processes such as inflammation, immunity, differentiation, cell growth, tumorigenesis and apoptosis. NF-kappa-B is a homo- or heterodimeric complex formed by the Rel-like domain-containing proteins RELA/p65, RELB, NFKB1/p105, NFKB1/p50, REL and NFKB2/p52. The dimers bind at kappa-B sites in the DNA of their target genes and the individual dimers have distinct preferences for different kappa-B sites that they can bind with distinguishable affinity and specificity. Different dimer combinations act as transcriptional activators or repressors, respectively. NF-kappa-B is controlled by various mechanisms of post-translational modification and subcellular compartmentalization as well as by interactions with other cofactors or corepressors. NF-kappa-B complexes are held in the cytoplasm in an inactive state complexed with members of the NF-kappa-B inhibitor (I-kappa-B) family. In a conventional activation pathway, I-kappa-B is phosphorylated by I-kappa-B kinases (IKKs) in response to different activators, subsequently degraded thus liberating the active NF-kappa-B complex which translocates to the nucleus. In a non-canonical activation pathway, the MAP3K14-activated CHUK/IKKA homodimer phosphorylates NFKB2/p100 associated with RelB, inducing its proteolytic processing to NFKB2/p52 and the formation of NF-kappa-B RelB-p52 complexes. The NF-kappa-B heterodimeric RelB-p52 complex is a transcriptional activator. The NF-kappa-B p52-p52 homodimer is a transcriptional repressor. NFKB2 appears to have dual functions such as cytoplasmic retention of attached NF-kappa-B proteins by p100 and generation of p52 by a cotranslational processing. The proteasome-mediated process ensures the production of both p52 and p100 and preserves their independent function. p52 binds to the kappa-B consensus sequence 5'-GGRNNYYCC-3', located in the enhancer region of genes involved in immune response and acute phase reactions. p52 and p100 are respectively the minor and major form; the processing of p100 being relatively poor. Isoform p49 is a subunit of the NF-kappa-B protein complex, which stimulates the HIV enhancer in synergy with p65. In concert with RELB, regulates the circadian clock by repressing the transcriptional activator activity of the CLOCK-BMAL1 heterodimer. The sequence is that of Nuclear factor NF-kappa-B p100 subunit (Nfkb2) from Mus musculus (Mouse).